Consider the following 148-residue polypeptide: Deoxyuridine 5'-triphosphate nucleotidohydrolase (148 aa).

Substrate contacts are provided by residues 68–70 (RSG), N81, 85–87 (TID), and K95.

Belongs to the dUTPase family. The cofactor is Mg(2+).

The catalysed reaction is dUTP + H2O = dUMP + diphosphate + H(+). Its pathway is pyrimidine metabolism; dUMP biosynthesis; dUMP from dCTP (dUTP route): step 2/2. Its function is as follows. This enzyme is involved in nucleotide metabolism: it produces dUMP, the immediate precursor of thymidine nucleotides and it decreases the intracellular concentration of dUTP so that uracil cannot be incorporated into DNA. The chain is Deoxyuridine 5'-triphosphate nucleotidohydrolase from Rickettsia prowazekii (strain Madrid E).